A 95-amino-acid chain; its full sequence is Co-chaperonin GroES (95 aa).

This sequence belongs to the GroES chaperonin family. In terms of assembly, heptamer of 7 subunits arranged in a ring. Interacts with the chaperonin GroEL.

The protein localises to the cytoplasm. Functionally, together with the chaperonin GroEL, plays an essential role in assisting protein folding. The GroEL-GroES system forms a nano-cage that allows encapsulation of the non-native substrate proteins and provides a physical environment optimized to promote and accelerate protein folding. GroES binds to the apical surface of the GroEL ring, thereby capping the opening of the GroEL channel. The sequence is that of Co-chaperonin GroES from Desulfatibacillum aliphaticivorans.